The following is a 750-amino-acid chain: K(+)-insensitive pyrophosphate-energized proton pump (750 aa).

The next 5 membrane-spanning stretches (helical) occupy residues 1 to 21 (MYGL…YQGI), 51 to 71 (FIII…GGLN), 78 to 98 (VVFI…VAWF), 133 to 153 (IGML…LFIP), and 161 to 181 (FIGF…AGGI). Lysine 184 provides a ligand contact to substrate. Residues aspartate 187, aspartate 191, and aspartate 216 each contribute to the Mg(2+) site. 6 consecutive transmembrane segments (helical) span residues 227-247 (DGFE…LLAI), 257-277 (LVWI…SYWV), 301-321 (LVWL…YMLI), 327-347 (GTMW…GALI), 391-411 (WMGL…TLGL), and 420-440 (VFAF…TIAV). Aspartate 448 is a Mg(2+) binding site. 4 helical membrane passes run 503–523 (VLIG…IMIL), 538–558 (ILWP…YWFT), 607–627 (GMIN…CLES), and 629–649 (LFIG…IFMA). Positions 656, 681, and 685 each coordinate Ca(2+). Lysine 688 provides a ligand contact to substrate. The next 2 membrane-spanning stretches (helical) occupy residues 694–714 (ALNP…ELAI) and 716–736 (LPTT…LVFV).

The protein belongs to the H(+)-translocating pyrophosphatase (TC 3.A.10) family. K(+)-insensitive subfamily. As to quaternary structure, homodimer. Mg(2+) is required as a cofactor.

It is found in the cell inner membrane. The catalysed reaction is diphosphate + H2O + H(+)(in) = 2 phosphate + 2 H(+)(out). Functionally, proton pump that utilizes the energy of pyrophosphate hydrolysis as the driving force for proton movement across the membrane. Generates a proton motive force. The chain is K(+)-insensitive pyrophosphate-energized proton pump from Chlorobaculum tepidum (strain ATCC 49652 / DSM 12025 / NBRC 103806 / TLS) (Chlorobium tepidum).